A 248-amino-acid polypeptide reads, in one-letter code: tRNA pseudouridine synthase A (248 aa).

The active-site Nucleophile is Asp52. Residue Tyr111 participates in substrate binding.

It belongs to the tRNA pseudouridine synthase TruA family. Homodimer.

The enzyme catalyses uridine(38/39/40) in tRNA = pseudouridine(38/39/40) in tRNA. Functionally, formation of pseudouridine at positions 38, 39 and 40 in the anticodon stem and loop of transfer RNAs. This chain is tRNA pseudouridine synthase A, found in Methylocella silvestris (strain DSM 15510 / CIP 108128 / LMG 27833 / NCIMB 13906 / BL2).